The sequence spans 343 residues: Methionine import ATP-binding protein MetN 1 (343 aa).

The 240-residue stretch at 2–241 (IKLSNITKVF…PKTPLAQKFI (240 aa)) folds into the ABC transporter domain. Residue 38–45 (GASGAGKS) participates in ATP binding.

The protein belongs to the ABC transporter superfamily. Methionine importer (TC 3.A.1.24) family. The complex is composed of two ATP-binding proteins (MetN), two transmembrane proteins (MetI) and a solute-binding protein (MetQ).

It localises to the cell inner membrane. It carries out the reaction L-methionine(out) + ATP + H2O = L-methionine(in) + ADP + phosphate + H(+). It catalyses the reaction D-methionine(out) + ATP + H2O = D-methionine(in) + ADP + phosphate + H(+). Its function is as follows. Part of the ABC transporter complex MetNIQ involved in methionine import. Responsible for energy coupling to the transport system. The chain is Methionine import ATP-binding protein MetN 1 from Salmonella paratyphi A (strain ATCC 9150 / SARB42).